The primary structure comprises 768 residues: UPF0313 protein VV2143 (768 aa).

A Radical SAM core domain is found at 363 to 640 (AYDMIKTSVN…LHKALLRYHD (278 aa)). [4Fe-4S] cluster is bound by residues Cys377, Cys381, and Cys384. Positions 674–768 (DARTPAQRRK…GGRNQPSRAR (95 aa)) are disordered. Positions 679–689 (AQRRKSGRHGA) are enriched in basic residues. Residues 719 to 731 (GGQSNSAPSRSGS) show a composition bias toward polar residues.

It belongs to the UPF0313 family. The cofactor is [4Fe-4S] cluster.

The polypeptide is UPF0313 protein VV2143 (Vibrio vulnificus (strain YJ016)).